The following is a 718-amino-acid chain: Pentatricopeptide repeat-containing protein At1g22960, mitochondrial (718 aa).

Residues 1–11 constitute a mitochondrion transit peptide; sequence MILCLRLCLRA. PPR repeat units follow at residues 167-201, 202-236, 237-271, 272-306, 307-341, 342-372, 373-407, 408-442, 443-477, 478-512, 514-548, 549-583, 584-618, 619-653, and 654-688; these read ALKL…GFLP, SVRN…GIMP, TVIT…NIEF, SEVT…GFAV, TPYS…GIYP, TTST…MAAP, DVVS…DIHP, SIVT…LIFP, DVIT…GIKP, DGYA…DHHA, DLTI…GLVP, DHVT…RLYP, SVIT…GVRP, NVMT…GIPP, and NKYS…EIEP.

The protein belongs to the PPR family. P subfamily.

The protein localises to the mitochondrion. The sequence is that of Pentatricopeptide repeat-containing protein At1g22960, mitochondrial from Arabidopsis thaliana (Mouse-ear cress).